The sequence spans 201 residues: Large ribosomal subunit protein uL4 (201 aa).

Positions 42-67 (GNSAQKTRSEVSGGGKKPWNQKGTGR) are disordered.

This sequence belongs to the universal ribosomal protein uL4 family. As to quaternary structure, part of the 50S ribosomal subunit.

One of the primary rRNA binding proteins, this protein initially binds near the 5'-end of the 23S rRNA. It is important during the early stages of 50S assembly. It makes multiple contacts with different domains of the 23S rRNA in the assembled 50S subunit and ribosome. Its function is as follows. Forms part of the polypeptide exit tunnel. The protein is Large ribosomal subunit protein uL4 of Legionella pneumophila (strain Paris).